A 74-amino-acid chain; its full sequence is Large ribosomal subunit protein bL28 (74 aa).

It belongs to the bacterial ribosomal protein bL28 family.

This is Large ribosomal subunit protein bL28 from Desulforapulum autotrophicum (strain ATCC 43914 / DSM 3382 / VKM B-1955 / HRM2) (Desulfobacterium autotrophicum).